Consider the following 506-residue polypeptide: ATP synthase subunit alpha (506 aa).

ATP is bound at residue 170–177 (GDRQTGKT).

The protein belongs to the ATPase alpha/beta chains family. F-type ATPases have 2 components, CF(1) - the catalytic core - and CF(0) - the membrane proton channel. CF(1) has five subunits: alpha(3), beta(3), gamma(1), delta(1), epsilon(1). CF(0) has four main subunits: a(1), b(1), b'(1) and c(9-12).

It localises to the cellular thylakoid membrane. It catalyses the reaction ATP + H2O + 4 H(+)(in) = ADP + phosphate + 5 H(+)(out). Its function is as follows. Produces ATP from ADP in the presence of a proton gradient across the membrane. The alpha chain is a regulatory subunit. In Parasynechococcus marenigrum (strain WH8102), this protein is ATP synthase subunit alpha.